The sequence spans 104 residues: MSEATAATAAIGKCWSVYLVRAENGALYCGISDDPLRRFDTHCSGKGARFFHSSPARALVYVEACASKGDALRRERAIKALSKRAKERLLVGVPVLREVGEPAI.

The region spanning 13–88 (KCWSVYLVRA…KALSKRAKER (76 aa)) is the GIY-YIG domain.

This sequence belongs to the UPF0213 family.

This is UPF0213 protein PA3854 from Pseudomonas aeruginosa (strain ATCC 15692 / DSM 22644 / CIP 104116 / JCM 14847 / LMG 12228 / 1C / PRS 101 / PAO1).